A 378-amino-acid polypeptide reads, in one-letter code: Anhydro-N-acetylmuramic acid kinase (378 aa).

9–16 (GTSADGID) lines the ATP pocket.

This sequence belongs to the anhydro-N-acetylmuramic acid kinase family.

It carries out the reaction 1,6-anhydro-N-acetyl-beta-muramate + ATP + H2O = N-acetyl-D-muramate 6-phosphate + ADP + H(+). It functions in the pathway amino-sugar metabolism; 1,6-anhydro-N-acetylmuramate degradation. Its pathway is cell wall biogenesis; peptidoglycan recycling. Its function is as follows. Catalyzes the specific phosphorylation of 1,6-anhydro-N-acetylmuramic acid (anhMurNAc) with the simultaneous cleavage of the 1,6-anhydro ring, generating MurNAc-6-P. Is required for the utilization of anhMurNAc either imported from the medium or derived from its own cell wall murein, and thus plays a role in cell wall recycling. The chain is Anhydro-N-acetylmuramic acid kinase from Synechococcus elongatus (strain ATCC 33912 / PCC 7942 / FACHB-805) (Anacystis nidulans R2).